The chain runs to 346 residues: Biotin synthase (346 aa).

One can recognise a Radical SAM core domain in the interval 38-256 (RQVQVSTLLS…IAVARIMMPT (219 aa)). Positions 53, 57, and 60 each coordinate [4Fe-4S] cluster. [2Fe-2S] cluster-binding residues include Cys97, Cys128, Cys188, and Arg260.

It belongs to the radical SAM superfamily. Biotin synthase family. In terms of assembly, homodimer. It depends on [4Fe-4S] cluster as a cofactor. The cofactor is [2Fe-2S] cluster.

It catalyses the reaction (4R,5S)-dethiobiotin + (sulfur carrier)-SH + 2 reduced [2Fe-2S]-[ferredoxin] + 2 S-adenosyl-L-methionine = (sulfur carrier)-H + biotin + 2 5'-deoxyadenosine + 2 L-methionine + 2 oxidized [2Fe-2S]-[ferredoxin]. It functions in the pathway cofactor biosynthesis; biotin biosynthesis; biotin from 7,8-diaminononanoate: step 2/2. In terms of biological role, catalyzes the conversion of dethiobiotin (DTB) to biotin by the insertion of a sulfur atom into dethiobiotin via a radical-based mechanism. The chain is Biotin synthase from Shigella dysenteriae serotype 1 (strain Sd197).